The primary structure comprises 179 residues: Large ribosomal subunit protein uL5 (179 aa).

Belongs to the universal ribosomal protein uL5 family. In terms of assembly, part of the 50S ribosomal subunit; part of the 5S rRNA/L5/L18/L25 subcomplex. Contacts the 5S rRNA and the P site tRNA. Forms a bridge to the 30S subunit in the 70S ribosome.

In terms of biological role, this is one of the proteins that bind and probably mediate the attachment of the 5S RNA into the large ribosomal subunit, where it forms part of the central protuberance. In the 70S ribosome it contacts protein S13 of the 30S subunit (bridge B1b), connecting the 2 subunits; this bridge is implicated in subunit movement. Contacts the P site tRNA; the 5S rRNA and some of its associated proteins might help stabilize positioning of ribosome-bound tRNAs. The protein is Large ribosomal subunit protein uL5 of Bordetella avium (strain 197N).